Consider the following 148-residue polypeptide: SsrA-binding protein (148 aa).

Belongs to the SmpB family.

It is found in the cytoplasm. Its function is as follows. Required for rescue of stalled ribosomes mediated by trans-translation. Binds to transfer-messenger RNA (tmRNA), required for stable association of tmRNA with ribosomes. tmRNA and SmpB together mimic tRNA shape, replacing the anticodon stem-loop with SmpB. tmRNA is encoded by the ssrA gene; the 2 termini fold to resemble tRNA(Ala) and it encodes a 'tag peptide', a short internal open reading frame. During trans-translation Ala-aminoacylated tmRNA acts like a tRNA, entering the A-site of stalled ribosomes, displacing the stalled mRNA. The ribosome then switches to translate the ORF on the tmRNA; the nascent peptide is terminated with the 'tag peptide' encoded by the tmRNA and targeted for degradation. The ribosome is freed to recommence translation, which seems to be the essential function of trans-translation. The polypeptide is SsrA-binding protein (Mycoplasma mycoides subsp. mycoides SC (strain CCUG 32753 / NCTC 10114 / PG1)).